The following is a 231-amino-acid chain: Cilia- and flagella-associated protein 299 (231 aa).

It is found in the cytoplasm. Its subcellular location is the nucleus. May be involved in spermatogenesis. The protein is Cilia- and flagella-associated protein 299 of Bos taurus (Bovine).